Here is a 456-residue protein sequence, read N- to C-terminus: MNVLVIGAGLAGSEAAWQVAQAGLPVTLVEMRPLRRSPAHHSSEFGELVCSNSFGALSSDRAAGLLQEELRRLGSLVISTADHHAVPAGGALAVDRGRYSAALTEALDAHPLVTIERREQQRLPEPGQITVLATGPLTSEPLAEDLRAFTGREDCHFFDAASPIVEGESINLEVAFRASRYDKGDADYINCPMNQEQYLAFREALLTAEQAELKDFEKDSATFFEGCLPIEELARRGEDTMRYGPLKPIGLWDQRWGDVTDRDVRRAKRAYAVVQLRQEDKDGRLWNLVGFQTNLKWGEQKRVLQLIPGLENASFVRFGVMHRNTFLEAPQLLQPTLQFRQRPSLLAAGQITGTEGYAAAVAGGWLAGTNAARIARGDAPIDLPATTMAGALTHFISEAPSGKFQPMPPNFGLLPELPERIRDKRRRYGAYRDRALADLAPFSSAPKVAEATAAAL.

Residue 7 to 12 (GAGLAG) coordinates FAD.

The protein belongs to the MnmG family. TrmFO subfamily. FAD is required as a cofactor.

Its subcellular location is the cytoplasm. The enzyme catalyses uridine(54) in tRNA + (6R)-5,10-methylene-5,6,7,8-tetrahydrofolate + NADH + H(+) = 5-methyluridine(54) in tRNA + (6S)-5,6,7,8-tetrahydrofolate + NAD(+). The catalysed reaction is uridine(54) in tRNA + (6R)-5,10-methylene-5,6,7,8-tetrahydrofolate + NADPH + H(+) = 5-methyluridine(54) in tRNA + (6S)-5,6,7,8-tetrahydrofolate + NADP(+). Its function is as follows. Catalyzes the folate-dependent formation of 5-methyl-uridine at position 54 (M-5-U54) in all tRNAs. This is Methylenetetrahydrofolate--tRNA-(uracil-5-)-methyltransferase TrmFO from Synechococcus sp. (strain RCC307).